Here is a 426-residue protein sequence, read N- to C-terminus: Glutamate-1-semialdehyde 2,1-aminomutase (426 aa).

Lys265 carries the N6-(pyridoxal phosphate)lysine modification.

It belongs to the class-III pyridoxal-phosphate-dependent aminotransferase family. HemL subfamily. Homodimer. Pyridoxal 5'-phosphate serves as cofactor.

The protein localises to the cytoplasm. It carries out the reaction (S)-4-amino-5-oxopentanoate = 5-aminolevulinate. It functions in the pathway porphyrin-containing compound metabolism; protoporphyrin-IX biosynthesis; 5-aminolevulinate from L-glutamyl-tRNA(Glu): step 2/2. The protein is Glutamate-1-semialdehyde 2,1-aminomutase of Pseudoalteromonas translucida (strain TAC 125).